The chain runs to 207 residues: Ankyrin repeat-containing protein P1E11.10 (207 aa).

ANK repeat units lie at residues 36–65 and 69–98; these read NGYT…DINI and DGET…TVKN.

Its subcellular location is the cytoplasm. The protein resides in the nucleus. This Schizosaccharomyces pombe (strain 972 / ATCC 24843) (Fission yeast) protein is Ankyrin repeat-containing protein P1E11.10.